Consider the following 553-residue polypeptide: Solute carrier family 22 member 12 (553 aa).

A helical transmembrane segment spans residues 9 to 29 (LVGGLGRFQVLQTMALMVSIM). Asn56 and Asn102 each carry an N-linked (GlcNAc...) asparagine glycan. 11 helical membrane-spanning segments follow: residues 146–166 (PMAQSIYLAGILVGAAACGPA), 174–194 (LVLTWSYLQMAVMGTAAAFAP), 195–215 (AFPVYCLFRFLLAFAVAGVMM), 232–252 (LVMTLNSLGFSFGHGLTAAVA), 260–280 (LLQLVVSVPFFLCFLYSWWLA), 351–371 (CISTLCWFAFGFTFFGLALDL), 378–398 (IFLLQMFIGVVDIPAKMGALL), 407–427 (PTLAASLLLAGLCILANTLVP), 435–455 (SALAVLGLGGVGAAFTCITIY), 466–486 (MTAVGLGQMAARGGAILGPLV), and 495–515 (WLPLLVYGTVPVLSGLAALLL). A Phosphothreonine modification is found at Thr542.

It belongs to the major facilitator (TC 2.A.1) superfamily. Organic cation transporter (TC 2.A.1.19) family. Interacts with PDZK1. Post-translationally, N-glycosylated. As to expression, detected in kidney (at protein level). Detected in fetal and adult kidney. Detected in epithelial cells of proximal tubules in renal cortex.

Its subcellular location is the apical cell membrane. The catalysed reaction is urate(out) + (S)-lactate(in) = urate(in) + (S)-lactate(out). It catalyses the reaction nicotinate(in) + urate(out) = nicotinate(out) + urate(in). The enzyme catalyses urate(out) + n chloride(in) = urate(in) + n chloride(out). It carries out the reaction orotate(out) + nicotinate(in) = orotate(in) + nicotinate(out). Functionally, electroneutral antiporter that translocates urate across the apical membrane of proximal tubular cells in exchange for monovalent organic or inorganic anions. Involved in renal reabsorption of urate and helps maintaining blood levels of uric acid. Mediates urate uptake by an exchange with organic anions such as (S)-lactate and nicotinate, and inorganic anion Cl(-). Other inorganic anions such as Br(-), I(-) and NO3(-) may also act as counteranions that exchange for urate. Also mediates orotate tubular uptake coupled with nicotinate efflux and to a lesser extent with lactate efflux, therefore displaying a potential role in orotate renal reabsorption. Orotate transport is Cl(-)-dependent. This Homo sapiens (Human) protein is Solute carrier family 22 member 12.